The sequence spans 439 residues: Elongation factor 1-alpha 2 (439 aa).

The region spanning 6–229 (KDHLNLVVIG…DEFKVPKRPI (224 aa)) is the tr-type G domain. The tract at residues 15–22 (GHVDSGKS) is G1. 15-22 (GHVDSGKS) contributes to the GTP binding site. Residues 71 to 75 (GITIN) form a G2 region. The interval 92–95 (DAPG) is G3. GTP-binding positions include 92–96 (DAPGH) and 154–157 (NKMD). Residues 154–157 (NKMD) form a G4 region. Positions 193-195 (SGF) are G5.

This sequence belongs to the TRAFAC class translation factor GTPase superfamily. Classic translation factor GTPase family. EF-Tu/EF-1A subfamily.

The protein localises to the cytoplasm. Functionally, this protein promotes the GTP-dependent binding of aminoacyl-tRNA to the A-site of ribosomes during protein biosynthesis. This chain is Elongation factor 1-alpha 2 (EFA2), found in Euplotes crassus.